A 113-amino-acid polypeptide reads, in one-letter code: Large ribosomal subunit protein bL17 (113 aa).

It belongs to the bacterial ribosomal protein bL17 family. As to quaternary structure, part of the 50S ribosomal subunit. Contacts protein L32.

The sequence is that of Large ribosomal subunit protein bL17 from Caldicellulosiruptor bescii (strain ATCC BAA-1888 / DSM 6725 / KCTC 15123 / Z-1320) (Anaerocellum thermophilum).